The sequence spans 38 residues: MSGPNPNKEPVELNRTSLFWGLLLIFVLAVLFSSYFFN.

A helical membrane pass occupies residues 17–37 (SLFWGLLLIFVLAVLFSSYFF).

The protein belongs to the PsbL family. As to quaternary structure, PSII is composed of 1 copy each of membrane proteins PsbA, PsbB, PsbC, PsbD, PsbE, PsbF, PsbH, PsbI, PsbJ, PsbK, PsbL, PsbM, PsbT, PsbX, PsbY, PsbZ, Psb30/Ycf12, at least 3 peripheral proteins of the oxygen-evolving complex and a large number of cofactors. It forms dimeric complexes.

The protein localises to the plastid. Its subcellular location is the chloroplast thylakoid membrane. One of the components of the core complex of photosystem II (PSII). PSII is a light-driven water:plastoquinone oxidoreductase that uses light energy to abstract electrons from H(2)O, generating O(2) and a proton gradient subsequently used for ATP formation. It consists of a core antenna complex that captures photons, and an electron transfer chain that converts photonic excitation into a charge separation. This subunit is found at the monomer-monomer interface and is required for correct PSII assembly and/or dimerization. In Gracilaria tenuistipitata var. liui (Red alga), this protein is Photosystem II reaction center protein L.